The primary structure comprises 641 residues: Phosphomethylpyrimidine synthase (641 aa).

Polar residues predominate over residues 1–13 (MNIRSNPDTTRPA). Residues 1-21 (MNIRSNPDTTRPAVTTGGLPS) form a disordered region. Substrate-binding positions include Asn221, Met250, Tyr279, His315, 335–337 (SRG), 376–379 (DGLR), and Glu415. Residue His419 coordinates Zn(2+). Substrate is bound at residue Tyr442. His483 serves as a coordination point for Zn(2+). Residues Cys563, Cys566, and Cys571 each contribute to the [4Fe-4S] cluster site.

It belongs to the ThiC family. In terms of assembly, homodimer. It depends on [4Fe-4S] cluster as a cofactor.

It carries out the reaction 5-amino-1-(5-phospho-beta-D-ribosyl)imidazole + S-adenosyl-L-methionine = 4-amino-2-methyl-5-(phosphooxymethyl)pyrimidine + CO + 5'-deoxyadenosine + formate + L-methionine + 3 H(+). It functions in the pathway cofactor biosynthesis; thiamine diphosphate biosynthesis. Its function is as follows. Catalyzes the synthesis of the hydroxymethylpyrimidine phosphate (HMP-P) moiety of thiamine from aminoimidazole ribotide (AIR) in a radical S-adenosyl-L-methionine (SAM)-dependent reaction. The chain is Phosphomethylpyrimidine synthase from Rhodopseudomonas palustris (strain BisB5).